We begin with the raw amino-acid sequence, 346 residues long: Selenide, water dikinase (346 aa).

U16 is a catalytic residue. A non-standard amino acid (selenocysteine) is located at residue U16. Residues K19 and 47-49 each bind ATP; that span reads TAD. D50 is a binding site for Mg(2+). ATP is bound by residues D67, D90, and 138-140; that span reads GHS. D90 provides a ligand contact to Mg(2+). D226 contributes to the Mg(2+) binding site.

The protein belongs to the selenophosphate synthase 1 family. Class I subfamily. As to quaternary structure, homodimer. Requires Mg(2+) as cofactor.

The catalysed reaction is hydrogenselenide + ATP + H2O = selenophosphate + AMP + phosphate + 2 H(+). In terms of biological role, synthesizes selenophosphate from selenide and ATP. The sequence is that of Selenide, water dikinase from Haemophilus influenzae (strain ATCC 51907 / DSM 11121 / KW20 / Rd).